The sequence spans 326 residues: Protein FAM110C (326 aa).

Disordered regions lie at residues 1–37, 51–80, and 201–221; these read MRAL…KSAV, TLGS…PSTL, and VELR…LSSR. The span at 209-221 shows a compositional bias: polar residues; the sequence is KGLQRSQSDLSSR. A Phosphoserine modification is found at serine 255.

The protein belongs to the FAM110 family. As to quaternary structure, interacts with AKT1; the interaction is transient and follows AKT1 activation. Interacts with PPP2CA and alpha-tubulin.

Its subcellular location is the cytoplasm. The protein resides in the cytoskeleton. The protein localises to the microtubule organizing center. It is found in the centrosome. It localises to the spindle pole. Its subcellular location is the nucleus. In terms of biological role, may play a role in microtubule organization. May play a role in cell spreading and cell migration of epithelial cells; the function may involve the AKT1 signaling pathway. The chain is Protein FAM110C (Fam110c) from Rattus norvegicus (Rat).